A 451-amino-acid polypeptide reads, in one-letter code: Gamma-aminobutyric acid receptor subunit alpha-2 (451 aa).

An N-terminal signal peptide occupies residues 1–28 (MKTKLNIYNMQLLLFVFLVWDPARLVLA). Residues 29–249 (NIQEDEAKNN…MTAHFHLKRK (221 aa)) are Extracellular-facing. An N-linked (GlcNAc...) asparagine glycan is attached at asparagine 38. Residue arginine 94 participates in 4-aminobutanoate binding. Residue asparagine 138 is glycosylated (N-linked (GlcNAc...) asparagine). Threonine 157 lines the 4-aminobutanoate pocket. Residues cysteine 166 and cysteine 180 are joined by a disulfide bond. Residues 250–270 (IGYFVIQTYLPCIMTVILSQV) traverse the membrane as a helical segment. Residues 271–280 (SFWLNRESVP) are Cytoplasmic-facing. Residues 281–300 (ARTVFGVTTVLTMTTLSISA) form a helical membrane-spanning segment. The Extracellular portion of the chain corresponds to 301-311 (RNSLPKVAYAT). A helical membrane pass occupies residues 312–332 (AMDWFIAVCYAFVFSALIEFA). Residues 333-420 (TVNYFTKRGW…FNSVSKIDRM (88 aa)) lie on the Cytoplasmic side of the membrane. A helical transmembrane segment spans residues 421 to 441 (SRIVFPVLFGTFNLVYWATYL). Topologically, residues 442–451 (NREPVLGVSP) are extracellular.

It belongs to the ligand-gated ion channel (TC 1.A.9) family. Gamma-aminobutyric acid receptor (TC 1.A.9.5) subfamily. GABRA2 sub-subfamily. Heteropentamer, formed by a combination of alpha (GABRA1-6), beta (GABRB1-3), gamma (GABRG1-3), delta (GABRD), epsilon (GABRE), rho (GABRR1-3), pi (GABRP) and theta (GABRQ) subunits, each subunit exhibiting distinct physiological and pharmacological properties. Interacts with UBQLN1. Interacts with KIF21B. Interacts with LHFPL4. Interacts with SHISA7; interaction leads to the regulation of GABA(A) receptor trafficking, channel deactivation kinetics and pharmacology. Post-translationally, glycosylated.

Its subcellular location is the postsynaptic cell membrane. It localises to the cell membrane. It is found in the cytoplasmic vesicle membrane. The protein resides in the cell projection. The protein localises to the dendrite. It carries out the reaction chloride(in) = chloride(out). With respect to regulation, activated by pentobarbital. Inhibited by the antagonist bicuculline. In terms of biological role, alpha subunit of the heteropentameric ligand-gated chloride channel gated by gamma-aminobutyric acid (GABA), a major inhibitory neurotransmitter in the brain. GABA-gated chloride channels, also named GABA(A) receptors (GABAAR), consist of five subunits arranged around a central pore and contain GABA active binding site(s) located at the alpha and beta subunit interface(s). When activated by GABA, GABAARs selectively allow the flow of chloride anions across the cell membrane down their electrochemical gradient. Chloride influx into the postsynaptic neuron following GABAAR opening decreases the neuron ability to generate a new action potential, thereby reducing nerve transmission. The alpha-2 subunit exhibits synaptogenic activity together with beta-2 and very little to no activity together with beta-3, the gamma-2 subunit being necessary but not sufficient to induce rapid synaptic contacts formation. The polypeptide is Gamma-aminobutyric acid receptor subunit alpha-2 (GABRA2) (Pongo abelii (Sumatran orangutan)).